Here is a 369-residue protein sequence, read N- to C-terminus: Phosphate acyltransferase (369 aa).

Residues 342–369 form a disordered region; the sequence is ASRAPNSQTAGGERAAAVPQSAQLRMDS.

It belongs to the PlsX family. As to quaternary structure, homodimer. Probably interacts with PlsY.

It is found in the cytoplasm. The catalysed reaction is a fatty acyl-[ACP] + phosphate = an acyl phosphate + holo-[ACP]. The protein operates within lipid metabolism; phospholipid metabolism. Its function is as follows. Catalyzes the reversible formation of acyl-phosphate (acyl-PO(4)) from acyl-[acyl-carrier-protein] (acyl-ACP). This enzyme utilizes acyl-ACP as fatty acyl donor, but not acyl-CoA. The chain is Phosphate acyltransferase from Methylocella silvestris (strain DSM 15510 / CIP 108128 / LMG 27833 / NCIMB 13906 / BL2).